Here is a 476-residue protein sequence, read N- to C-terminus: Glycogen synthase (476 aa).

Lys15 provides a ligand contact to ADP-alpha-D-glucose.

Belongs to the glycosyltransferase 1 family. Bacterial/plant glycogen synthase subfamily.

The enzyme catalyses [(1-&gt;4)-alpha-D-glucosyl](n) + ADP-alpha-D-glucose = [(1-&gt;4)-alpha-D-glucosyl](n+1) + ADP + H(+). It functions in the pathway glycan biosynthesis; glycogen biosynthesis. Its function is as follows. Synthesizes alpha-1,4-glucan chains using ADP-glucose. This is Glycogen synthase from Halalkalibacterium halodurans (strain ATCC BAA-125 / DSM 18197 / FERM 7344 / JCM 9153 / C-125) (Bacillus halodurans).